Consider the following 57-residue polypeptide: Large ribosomal subunit protein bL32 (57 aa).

Belongs to the bacterial ribosomal protein bL32 family.

This Staphylococcus haemolyticus (strain JCSC1435) protein is Large ribosomal subunit protein bL32.